Consider the following 336-residue polypeptide: Holliday junction branch migration complex subunit RuvB (336 aa).

The interval 1-181 (MDRIVEIEKF…FGMQFRLEFY (181 aa)) is large ATPase domain (RuvB-L). ATP is bound by residues leucine 20, arginine 21, glycine 62, lysine 65, threonine 66, threonine 67, 128-130 (EDF), arginine 171, tyrosine 181, and arginine 218. Threonine 66 contacts Mg(2+). A small ATPAse domain (RuvB-S) region spans residues 182-252 (KNEELAIILE…RAKEALDSLG (71 aa)). Positions 255–336 (ELGFDAMDLR…KYNKGLFDEK (82 aa)) are head domain (RuvB-H). Positions 309 and 314 each coordinate DNA.

The protein belongs to the RuvB family. In terms of assembly, homohexamer. Forms an RuvA(8)-RuvB(12)-Holliday junction (HJ) complex. HJ DNA is sandwiched between 2 RuvA tetramers; dsDNA enters through RuvA and exits via RuvB. An RuvB hexamer assembles on each DNA strand where it exits the tetramer. Each RuvB hexamer is contacted by two RuvA subunits (via domain III) on 2 adjacent RuvB subunits; this complex drives branch migration. In the full resolvosome a probable DNA-RuvA(4)-RuvB(12)-RuvC(2) complex forms which resolves the HJ.

It localises to the cytoplasm. It carries out the reaction ATP + H2O = ADP + phosphate + H(+). Functionally, the RuvA-RuvB-RuvC complex processes Holliday junction (HJ) DNA during genetic recombination and DNA repair, while the RuvA-RuvB complex plays an important role in the rescue of blocked DNA replication forks via replication fork reversal (RFR). RuvA specifically binds to HJ cruciform DNA, conferring on it an open structure. The RuvB hexamer acts as an ATP-dependent pump, pulling dsDNA into and through the RuvAB complex. RuvB forms 2 homohexamers on either side of HJ DNA bound by 1 or 2 RuvA tetramers; 4 subunits per hexamer contact DNA at a time. Coordinated motions by a converter formed by DNA-disengaged RuvB subunits stimulates ATP hydrolysis and nucleotide exchange. Immobilization of the converter enables RuvB to convert the ATP-contained energy into a lever motion, pulling 2 nucleotides of DNA out of the RuvA tetramer per ATP hydrolyzed, thus driving DNA branch migration. The RuvB motors rotate together with the DNA substrate, which together with the progressing nucleotide cycle form the mechanistic basis for DNA recombination by continuous HJ branch migration. Branch migration allows RuvC to scan DNA until it finds its consensus sequence, where it cleaves and resolves cruciform DNA. The chain is Holliday junction branch migration complex subunit RuvB from Campylobacter lari (strain RM2100 / D67 / ATCC BAA-1060).